The following is an 84-amino-acid chain: MGRTPTAVQVKSFTKQGQQRRVCRDLPLKNTKNGLSPGMRTCFLYLRFFPCLSWMSLKWTQAVHCARNIVLSFMLLLLLLNYNM.

This chain is Putative protein BCE-1 (BCE1), found in Homo sapiens (Human).